The primary structure comprises 801 residues: Probable inorganic carbon transporter subunit DabA (801 aa).

Zn(2+) is bound by residues cysteine 298, aspartate 300, histidine 481, and cysteine 496. A disordered region spans residues arginine 575–glutamate 596.

This sequence belongs to the inorganic carbon transporter (TC 9.A.2) DabA family. In terms of assembly, forms a complex with DabB. Requires Zn(2+) as cofactor.

It localises to the cell membrane. Part of an energy-coupled inorganic carbon pump. The sequence is that of Probable inorganic carbon transporter subunit DabA from Haloarcula marismortui (strain ATCC 43049 / DSM 3752 / JCM 8966 / VKM B-1809) (Halobacterium marismortui).